A 453-amino-acid polypeptide reads, in one-letter code: Probable multidrug resistance protein NorM (453 aa).

A run of 12 helical transmembrane segments spans residues 12 to 34, 54 to 76, 96 to 118, 128 to 150, 162 to 184, 194 to 216, 243 to 265, 285 to 307, 319 to 338, 358 to 380, 387 to 406, and 416 to 438; these read VLFL…ASFV, TSIW…PIIG, YLAL…TILN, AVAV…FSVI, LSMY…LIYG, AGAG…LVLF, LGLP…GLIM, LMYA…EVGA, LGRW…LYIF, RFLT…QGIL, VIPF…PVAT, and AYSY…RWRL.

It belongs to the multi antimicrobial extrusion (MATE) (TC 2.A.66.1) family.

The protein localises to the cell membrane. In terms of biological role, multidrug efflux pump. This is Probable multidrug resistance protein NorM (norM) from Streptococcus pneumoniae (strain ATCC BAA-255 / R6).